Here is a 469-residue protein sequence, read N- to C-terminus: Phosphoenolpyruvate carboxylase (469 aa).

It belongs to the PEPCase type 2 family. In terms of assembly, homotetramer. Mg(2+) is required as a cofactor.

The catalysed reaction is oxaloacetate + phosphate = phosphoenolpyruvate + hydrogencarbonate. Its function is as follows. Catalyzes the irreversible beta-carboxylation of phosphoenolpyruvate (PEP) to form oxaloacetate (OAA), a four-carbon dicarboxylic acid source for the tricarboxylic acid cycle. This is Phosphoenolpyruvate carboxylase from Pyrococcus horikoshii (strain ATCC 700860 / DSM 12428 / JCM 9974 / NBRC 100139 / OT-3).